The following is a 770-amino-acid chain: Signal transducer and activator of transcription 3 (770 aa).

At A2 the chain carries N-acetylalanine. 2 positions are modified to N6-acetyllysine: K49 and K87. An Essential for nuclear import motif is present at residues 150–162; the sequence is DVRKRVQDLEQKM. In terms of domain architecture, SH2 spans 580–670; sequence WNEGYIMGFI…DATNILVSPL (91 aa). Residues K601, K615, and K631 each carry the allysine; alternate modification. Residues K601, K615, and K631 each carry the N6-acetyllysine; alternate modification. Position 640 is a phosphotyrosine; by TYK2 (Y640). The residue at position 685 (K685) is an Allysine; alternate. K685 is subject to N6-acetyllysine; alternate. Phosphotyrosine; by FER and PTK6 is present on Y705. K707 is modified (N6-acetyllysine). At T714 the chain carries Phosphothreonine. S727 carries the phosphoserine; by DYRK2, NLK, NEK6, IRAK1, RPS6KA5, ZIPK/DAPK3 and PKC/PRKCE modification.

The protein belongs to the transcription factor STAT family. As to quaternary structure, forms a homodimer or a heterodimer with a related family member (at least STAT1). Component of a promoter-binding complex composed of STAT3, NFATC3 and NFATC4; complex formation is enhanced by calcineurin. Interacts with IL31RA, NCOA1, PELP1, SIPAR, SOCS7, STATIP1 and TMF1. Interacts with IL23R in presence of IL23. Interacts (via SH2 domain) with NLK. Interacts with ARL2BP; the interaction is enhanced by LIF and JAK1 expression. Interacts with KPNA4 and KPNA5; KPNA4 may be the primary mediator of nuclear import. Interacts with CAV2; the interaction is increased on insulin-induced tyrosine phosphorylation of CAV2 and leads to STAT3 activation. Interacts with ARL2BP; interaction is enhanced with ARL2. Interacts with NEK6. Binds to CDK9 when activated and nuclear. Interacts with BMX. Interacts with ZIPK/DAPK3. Interacts with PIAS3; the interaction occurs on stimulation by IL6, CNTF or OSM and inhibits the DNA binding activity of STAT3. In prostate cancer cells, interacts with PRKCE and promotes DNA binding activity of STAT3. Interacts with STMN3, antagonizing its microtubule-destabilizing activity. Interacts with the 'Lys-129' acetylated form of BIRC5/survivin. Interacts with FER. Interacts (via SH2 domain) with EIF2AK2/PKR (via the kinase catalytic domain). Interacts with FGFR4. Interacts with INPP5F; the interaction is independent of STAT3 Tyr-705 phosphorylation status. Interacts with OCIAD1 and OCIAD2. Interacts (unphosphorylated or phosphorylated at Ser-727) with PHB1. Interacts and may form heterodimers with NHLH1. Found in a complex with SLC39A6, SLC39A10 and with the 'Ser-727' phosphorylated form of STAT3 throughout mitosis. Interacts (when acetylated) with EP300 (via bromo domain); interaction takes place following STAT3 acetylation by EP300 and promotes enhanceosome assembly. Interacts (when acetylated) with BRD2 (via bromo domain); interaction promotes STAT3 recruitment to chromatin and T-helper Th17 cell differentiation. Interacts with FAM220A/SIPAR; the interaction occurs in both the nucleus and the cytoplasm, is enhanced by IL6 and promotes STAT3 dephosphorylation. Interacts in both unphosphorylated and phosphorylated forms with FAM220A but interacts preferentially in the phosphorylated form in the nucleus. Interacts with PTPN2; the interaction is promoted by FAM220A and leads to STAT3 dephosphorylation which negatively regulates STAT3 transcriptional activator activity. Post-translationally, activated through tyrosine phosphorylation by BMX. Tyrosine phosphorylated in response to IL-6, IL-11, CNTF, LIF, CSF-1, EGF, PDGF, IFN-alpha and OSM. Tyrosine phosphorylated in response to constitutively activated FGFR1, FGFR2, FGFR3 and FGFR4. Phosphorylated on serine upon DNA damage, probably by ATM or ATR. Serine phosphorylation is important for the formation of stable DNA-binding STAT3 homodimers and maximal transcriptional activity. ARL2BP may participate in keeping the phosphorylated state of STAT3 within the nucleus. Tyrosine phosphorylated upon stimulation with EGF. Upon LPS challenge, phosphorylated within the nucleus by IRAK1. Phosphorylated on Ser-727 by RPS6KA5. Dephosphorylation on tyrosine residues by PTPN2 negatively regulates IL6/interleukin-6 signaling. Phosphorylation at Tyr-705 by FER, isoform M2 of PKM (PKM2) or PTK6 leads to an increase of its transcriptional activity. Phosphorylation at Tyr-705 is increased in the presence of calcineurin. Phosphorylation at Tyr-640 by TYK2 negatively regulates transcriptional activity. Acetylated on lysine residues by EP300/p300, promoting its activation. Acetylation at Lys-49 and Lys-87 by EP300/p300 promotes its activation. Acetylation at Lys-87 by EP300/p300 promotes its association with BRD2 and recruitment to chromatin. Deacetylated at Lys-49 and Lys-87 by HDAC1. Acetylation at Lys-685 by EP300/p300 promotes its homodimerization and activation. Deacetylated at Lys-685 by HDAC3. Acetylated on lysine residues by CREBBP. Deacetylation by LOXL3 leads to disrupt STAT3 dimerization and inhibit STAT3 transcription activity. Oxidation of lysine residues to allysine on STAT3 preferentially takes place on lysine residues that are acetylated. In terms of processing, some lysine residues are oxidized to allysine by LOXL3, leading to disrupt STAT3 dimerization and inhibit STAT3 transcription activity. Oxidation of lysine residues to allysine on STAT3 preferentially takes place on lysine residues that are acetylated.

It is found in the cytoplasm. It localises to the nucleus. Its function is as follows. Signal transducer and transcription activator that mediates cellular responses to interleukins, KITLG/SCF, LEP and other growth factors. Once activated, recruits coactivators, such as NCOA1 or MED1, to the promoter region of the target gene. May mediate cellular responses to activated FGFR1, FGFR2, FGFR3 and FGFR4. Upon activation of IL6ST/gp130 signaling by interleukin-6 (IL6), binds to the IL6-responsive elements identified in the promoters of various acute-phase protein genes. Activated by IL31 through IL31RA. Acts as a regulator of inflammatory response by regulating differentiation of naive CD4(+) T-cells into T-helper Th17 or regulatory T-cells (Treg): acetylation promotes its transcription activity and cell differentiation while deacetylation and oxidation of lysine residues by LOXL3 inhibits differentiation. Involved in cell cycle regulation by inducing the expression of key genes for the progression from G1 to S phase, such as CCND1. Mediates the effects of LEP on melanocortin production, body energy homeostasis and lactation. May play an apoptotic role by transctivating BIRC5 expression under LEP activation. Cytoplasmic STAT3 represses macroautophagy by inhibiting EIF2AK2/PKR activity. Plays a crucial role in basal beta cell functions, such as regulation of insulin secretion. Following JAK/STAT signaling activation and as part of a complex with NFATC3 and NFATC4, binds to the alpha-beta E4 promoter region of CRYAB and activates transcription in cardiomyocytes. Plays an important role in host defense in methicillin-resistant S.aureus lung infection by regulating the expression of the antimicrobial lectin REG3G. The protein is Signal transducer and activator of transcription 3 (STAT3) of Bos taurus (Bovine).